Here is a 244-residue protein sequence, read N- to C-terminus: Phosphoadenosine 5'-phosphosulfate reductase (244 aa).

Catalysis depends on Cys239, which acts as the Nucleophile; cysteine thiosulfonate intermediate.

This sequence belongs to the PAPS reductase family. CysH subfamily.

It localises to the cytoplasm. The enzyme catalyses [thioredoxin]-disulfide + sulfite + adenosine 3',5'-bisphosphate + 2 H(+) = [thioredoxin]-dithiol + 3'-phosphoadenylyl sulfate. It participates in sulfur metabolism; hydrogen sulfide biosynthesis; sulfite from sulfate: step 3/3. Its function is as follows. Catalyzes the formation of sulfite from phosphoadenosine 5'-phosphosulfate (PAPS) using thioredoxin as an electron donor. The sequence is that of Phosphoadenosine 5'-phosphosulfate reductase from Klebsiella pneumoniae (strain 342).